The following is a 965-amino-acid chain: Klaroid protein (965 aa).

Residues 1–20 (MSENTYQIETRRRSRSKTPF) form a disordered region. The next 2 membrane-spanning stretches (helical) occupy residues 303–323 (TIGGGLASLLRYLYVFIGSVL) and 343–363 (FLIFLLILLPLLLLSGWLLLQ). The stretch at 585 to 612 (SSDAEVQIERLNREIAFIKLALSDKQAE) forms a coiled coil. The SUN domain occupies 801 to 963 (GGQILSTRCT…YRFRVHGKPP (163 aa)).

In terms of assembly, core component of the LINC complex which is composed of inner nuclear membrane SUN domain-containing proteins coupled to outer nuclear membrane KASH domain-containing nesprins. In terms of tissue distribution, expressed in all cells in the eye disk.

The protein localises to the membrane. It localises to the cytoplasm. The protein resides in the cytoskeleton. It is found in the microtubule organizing center. Its subcellular location is the perinuclear region. Component of the LINC (LInker of Nucleoskeleton and Cytoskeleton) complex involved in the connection between the nuclear lamina and the cytoskeleton. Is required to nuclear migration in eye and to anchor klar in the nuclear membrane. This Drosophila melanogaster (Fruit fly) protein is Klaroid protein.